Consider the following 564-residue polypeptide: Dihydroxy-acid dehydratase (564 aa).

C53 provides a ligand contact to [2Fe-2S] cluster. D85 contacts Mg(2+). A [2Fe-2S] cluster-binding site is contributed by C126. Positions 127 and 128 each coordinate Mg(2+). K128 is subject to N6-carboxylysine. Position 203 (C203) interacts with [2Fe-2S] cluster. E454 contacts Mg(2+). S480 (proton acceptor) is an active-site residue.

It belongs to the IlvD/Edd family. In terms of assembly, homodimer. [2Fe-2S] cluster serves as cofactor. The cofactor is Mg(2+).

It catalyses the reaction (2R)-2,3-dihydroxy-3-methylbutanoate = 3-methyl-2-oxobutanoate + H2O. The catalysed reaction is (2R,3R)-2,3-dihydroxy-3-methylpentanoate = (S)-3-methyl-2-oxopentanoate + H2O. It functions in the pathway amino-acid biosynthesis; L-isoleucine biosynthesis; L-isoleucine from 2-oxobutanoate: step 3/4. It participates in amino-acid biosynthesis; L-valine biosynthesis; L-valine from pyruvate: step 3/4. Functions in the biosynthesis of branched-chain amino acids. Catalyzes the dehydration of (2R,3R)-2,3-dihydroxy-3-methylpentanoate (2,3-dihydroxy-3-methylvalerate) into 2-oxo-3-methylpentanoate (2-oxo-3-methylvalerate) and of (2R)-2,3-dihydroxy-3-methylbutanoate (2,3-dihydroxyisovalerate) into 2-oxo-3-methylbutanoate (2-oxoisovalerate), the penultimate precursor to L-isoleucine and L-valine, respectively. The sequence is that of Dihydroxy-acid dehydratase from Mycobacterium leprae (strain TN).